The primary structure comprises 74 residues: U4-theraphotoxin-Cg1a (74 aa).

The signal sequence occupies residues 1–19; sequence MNATIFALLLLLNLAMHNA. A propeptide spanning residues 20 to 39 is cleaved from the precursor; the sequence is AEQSSETDMDDTLLIPEINR. Disulfide bonds link Cys-42–Cys-56, Cys-49–Cys-61, and Cys-55–Cys-71.

The protein belongs to the neurotoxin 36 family. 01 subfamily. Expressed by the venom gland.

The protein localises to the secreted. Functionally, probable ion channel inhibitor. The sequence is that of U4-theraphotoxin-Cg1a from Chilobrachys guangxiensis (Chinese earth tiger tarantula).